The sequence spans 383 residues: Probable endopolygalacturonase C (383 aa).

Positions 1-16 (MVRQLILISSLLAAVA) are cleaved as a signal peptide. A propeptide spanning residues 17–40 (VRAPADPAHPMVTEAPDVNLVEKR) is cleaved from the precursor. Cysteine 44 and cysteine 62 form a disulfide bridge. PbH1 repeat units lie at residues 175-206 (STDL…DIGE) and 207-228 (STYI…AINS). The active-site Proton donor is aspartate 221. Cysteine 223 and cysteine 239 are disulfide-bonded. The active site involves histidine 243. PbH1 repeat units follow at residues 253–279 (RDDN…RIKT) and 287–309 (VSEV…VIEQ). A glycan (N-linked (GlcNAc...) asparagine) is linked at asparagine 260. Disulfide bonds link cysteine 348-cysteine 353 and cysteine 372-cysteine 381.

It belongs to the glycosyl hydrolase 28 family.

It is found in the secreted. The enzyme catalyses (1,4-alpha-D-galacturonosyl)n+m + H2O = (1,4-alpha-D-galacturonosyl)n + (1,4-alpha-D-galacturonosyl)m.. Its function is as follows. Involved in maceration and soft-rotting of plant tissue. Hydrolyzes the 1,4-alpha glycosidic bonds of de-esterified pectate in the smooth region of the plant cell wall. The protein is Probable endopolygalacturonase C (pgaC) of Aspergillus niger.